Consider the following 475-residue polypeptide: Bifunctional aspartate aminotransferase and glutamate/aspartate-prephenate aminotransferase (475 aa).

Residues M1–M55 constitute a chloroplast transit peptide. Positions 107, 193, and 243 each coordinate L-aspartate. K306 carries the N6-(pyridoxal phosphate)lysine modification. An L-aspartate-binding site is contributed by R445.

This sequence belongs to the class-I pyridoxal-phosphate-dependent aminotransferase family. As to quaternary structure, homodimer. It depends on pyridoxal 5'-phosphate as a cofactor.

It is found in the plastid. Its subcellular location is the chloroplast. It catalyses the reaction L-aspartate + 2-oxoglutarate = oxaloacetate + L-glutamate. The catalysed reaction is L-arogenate + oxaloacetate = prephenate + L-aspartate. The enzyme catalyses L-arogenate + 2-oxoglutarate = prephenate + L-glutamate. It participates in amino-acid biosynthesis; L-phenylalanine biosynthesis; L-arogenate from prephenate (L-Asp route): step 1/1. The protein operates within amino-acid biosynthesis; L-phenylalanine biosynthesis; L-arogenate from prephenate (L-Glu route): step 1/1. Prokaryotic-type aspartate aminotransferase. Also has a prenate transaminase activity. Involved in the aromatic amino acids biosynthesis pathway via the arogenate route. Required for the transamination of prephenate into arogenate. Required for early development of the embryo. The polypeptide is Bifunctional aspartate aminotransferase and glutamate/aspartate-prephenate aminotransferase (PAT) (Arabidopsis thaliana (Mouse-ear cress)).